The chain runs to 256 residues: Thiazole synthase (256 aa).

The active-site Schiff-base intermediate with DXP is Lys-96. 1-deoxy-D-xylulose 5-phosphate-binding positions include Gly-157, 184–185 (AG), and 206–207 (NT).

This sequence belongs to the ThiG family. In terms of assembly, homotetramer. Forms heterodimers with either ThiH or ThiS.

Its subcellular location is the cytoplasm. The enzyme catalyses [ThiS sulfur-carrier protein]-C-terminal-Gly-aminoethanethioate + 2-iminoacetate + 1-deoxy-D-xylulose 5-phosphate = [ThiS sulfur-carrier protein]-C-terminal Gly-Gly + 2-[(2R,5Z)-2-carboxy-4-methylthiazol-5(2H)-ylidene]ethyl phosphate + 2 H2O + H(+). It participates in cofactor biosynthesis; thiamine diphosphate biosynthesis. In terms of biological role, catalyzes the rearrangement of 1-deoxy-D-xylulose 5-phosphate (DXP) to produce the thiazole phosphate moiety of thiamine. Sulfur is provided by the thiocarboxylate moiety of the carrier protein ThiS. In vitro, sulfur can be provided by H(2)S. This chain is Thiazole synthase, found in Roseobacter denitrificans (strain ATCC 33942 / OCh 114) (Erythrobacter sp. (strain OCh 114)).